The chain runs to 405 residues: Fragilysin (405 aa).

The signal sequence occupies residues methionine 1–alanine 25. Histidine 356 is a binding site for Zn(2+). The active site involves glutamate 357. Residues histidine 360 and histidine 366 each contribute to the Zn(2+) site.

Belongs to the peptidase M10C family. Requires Zn(2+) as cofactor.

The protein localises to the secreted. It carries out the reaction Broad proteolytic specificity, bonds hydrolyzed includes -Gly-|-Leu-, -Met-|-Leu-, -Phe-|-Leu-, -Cys-|-Leu-, -Leu-|-Gly-.. Diarrheal toxin that hydrolyzes gelatin, azocoll, actin, tropomyosin, and fibrinogen. The polypeptide is Fragilysin (btfP) (Bacteroides fragilis).